Here is a 1927-residue protein sequence, read N- to C-terminus: Integrin beta-like protein A (1927 aa).

A signal peptide spans 1–20; the sequence is MNRILTLFILFISLFIVCEA. Residues 21–1860 lie on the Extracellular side of the membrane; sequence THFRFGTMSW…KENNNKTVLT (1840 aa). Asn309 carries N-linked (GlcNAc...) asparagine glycosylation. One can recognise an EGF-like domain in the interval 425–462; that stretch reads YGEKCDPVDPCVNGESNEGSQGNGKCTCYYGWEGKNCD. Cystine bridges form between Cys435–Cys450 and Cys452–Cys461. Residues 522–709 enclose the VWFA domain; that stretch reads EVLVLVDSQP…VLSKAVVKAI (188 aa). Asn1122, Asn1516, Asn1717, Asn1723, and Asn1855 each carry an N-linked (GlcNAc...) asparagine glycan. The chain crosses the membrane as a helical span at residues 1861 to 1881; the sequence is GAIAGAAAGAGLLAAGAWFLL. The Cytoplasmic portion of the chain corresponds to 1882-1927; that stretch reads KKSAPPTDAFFGEGAFADGAVSTNPMYEESGRSAINPLYEASSENL.

This sequence belongs to the SIB family. Interacts with talA/talin.

The protein resides in the membrane. In terms of biological role, implicated in cellular adhesion to substrate or phagocytic particles. The protein is Integrin beta-like protein A (sibA) of Dictyostelium discoideum (Social amoeba).